The primary structure comprises 513 residues: Bone morphogenetic protein 6 (513 aa).

The N-terminal stretch at 1–20 (MPGLGRRAQWLCWWWGLLCS) is a signal peptide. Residues 21–374 (CCGPPPLRPP…VSEVHVRTTR (354 aa)) constitute a propeptide that is removed on maturation. 3 disordered regions span residues 38 to 66 (AAGG…SSGF), 89 to 131 (LPHR…RLKS), and 145 to 200 (ADND…ASPL). A compositionally biased stretch (low complexity) spans 98 to 121 (GLQQPQPPALRQQEEQQQQQQLPR). The span at 158 to 172 (QQSWPHEAASSSQRR) shows a compositional bias: polar residues. 5 N-linked (GlcNAc...) asparagine glycosylation sites follow: asparagine 241, asparagine 269, asparagine 386, asparagine 404, and asparagine 454. The interval 373–398 (TRSASSRRRQQSRNRSTQSQDVARVS) is disordered. Disulfide bonds link cysteine 412/cysteine 478, cysteine 441/cysteine 510, and cysteine 445/cysteine 512.

This sequence belongs to the TGF-beta family. As to quaternary structure, interacts with SOSTDC1. Interacts (when glycosylated) with type I receptor ACVR1; the interaction may induce HAMP expression. Interacts with type II receptor ACVR2B. Interacts with Hemojuvelin/HJV. Interacts with ERFE; the interaction inhibits BMP-induced transcription of HAMP. Interacts with BMPR1A/ALK3. Forms heterodimers with BMP2 in vitro; the heterodimer then binds to its receptor BMPR1A /ALK3 and may induce HAMP expression. In terms of processing, glycosylated at Asn-454. Glycosylation is crucial for recognition by the activin receptor type I/ACVR1.

Its subcellular location is the secreted. In terms of biological role, growth factor of the TGF-beta superfamily that plays essential roles in many developmental processes including cartilage and bone formation. Also plays an important role in the regulation of HAMP/hepcidin expression and iron metabolism by acting as a ligand for hemojuvelin/HJV. Also acts to promote expression of HAMP, potentially via the interaction with its receptor BMPR1A/ALK3. Initiates the canonical BMP signaling cascade by associating with type I receptor ACVR1 and type II receptor ACVR2B. In turn, ACVR1 propagates signal by phosphorylating SMAD1/5/8 that travel to the nucleus and act as activators and repressors of transcription of target. Can also signal through non-canonical pathway such as TAZ-Hippo signaling cascade to modulate VEGF signaling by regulating VEGFR2 expression. The protein is Bone morphogenetic protein 6 (BMP6) of Homo sapiens (Human).